We begin with the raw amino-acid sequence, 189 residues long: Peptidyl-tRNA hydrolase (189 aa).

Tyr15 is a tRNA binding site. Catalysis depends on His20, which acts as the Proton acceptor. Residues Phe66, Asn68, and Asn114 each contribute to the tRNA site.

The protein belongs to the PTH family. As to quaternary structure, monomer.

The protein localises to the cytoplasm. The catalysed reaction is an N-acyl-L-alpha-aminoacyl-tRNA + H2O = an N-acyl-L-amino acid + a tRNA + H(+). Functionally, hydrolyzes ribosome-free peptidyl-tRNAs (with 1 or more amino acids incorporated), which drop off the ribosome during protein synthesis, or as a result of ribosome stalling. Its function is as follows. Catalyzes the release of premature peptidyl moieties from peptidyl-tRNA molecules trapped in stalled 50S ribosomal subunits, and thus maintains levels of free tRNAs and 50S ribosomes. The chain is Peptidyl-tRNA hydrolase from Dichelobacter nodosus (strain VCS1703A).